A 329-amino-acid chain; its full sequence is GTP 3',8-cyclase (329 aa).

The 227-residue stretch at 8–234 folds into the Radical SAM core domain; it reads AFARKFYYLR…QLRQRSDGPA (227 aa). Residue Arg-17 coordinates GTP. Positions 24 and 28 each coordinate [4Fe-4S] cluster. Tyr-30 serves as a coordination point for S-adenosyl-L-methionine. Position 31 (Cys-31) interacts with [4Fe-4S] cluster. Arg-68 contributes to the GTP binding site. Gly-72 contributes to the S-adenosyl-L-methionine binding site. GTP is bound at residue Thr-99. S-adenosyl-L-methionine is bound at residue Ser-123. Lys-160 is a binding site for GTP. Met-194 provides a ligand contact to S-adenosyl-L-methionine. Residues Cys-257 and Cys-260 each coordinate [4Fe-4S] cluster. 262–264 serves as a coordination point for GTP; that stretch reads RLR. Residue Cys-274 coordinates [4Fe-4S] cluster.

This sequence belongs to the radical SAM superfamily. MoaA family. As to quaternary structure, monomer and homodimer. [4Fe-4S] cluster serves as cofactor.

The enzyme catalyses GTP + AH2 + S-adenosyl-L-methionine = (8S)-3',8-cyclo-7,8-dihydroguanosine 5'-triphosphate + 5'-deoxyadenosine + L-methionine + A + H(+). The protein operates within cofactor biosynthesis; molybdopterin biosynthesis. In terms of biological role, catalyzes the cyclization of GTP to (8S)-3',8-cyclo-7,8-dihydroguanosine 5'-triphosphate. This chain is GTP 3',8-cyclase, found in Escherichia coli O139:H28 (strain E24377A / ETEC).